The sequence spans 520 residues: MTSANKSDKDRVVIFDTTLRDGEQCPGATMTFEEKLEVAEMLDDMGIDIIEAGFPIASVGDFEAVAEIAKNAKNAVIAGLARAIPGDIARAGEAVRHARRGRIHTFVSTSPIHLAHQMRKSEAEVLEIITATVTQARNLVEDVEWSAMDATRTPIDYLCKCVETAIAAGATTVNLPDTVGYAVPDEYRRMFRTIRERVPNADKAIFSVHCHDDLGLAVANSLAGVEGGARQVESTINGIGERAGNAALEEVVMAIKTRGDVMPYWCNVESTMLTRASKLVSAATSFPVQYNKAIVGRNAFAHESGIHQDGMLKNAQTYEIMTPESVGVKQTSLVMGKHSGRHAFQHKLEELGYKLAENQLQDAFVRFKALADRKKDIYDEDIVALVDEEMAASHDRIKLTSLTVIAGTHGPQRATMKLTVDGQTRIEEAEGNGPVDAVFNCIKRLVPHEAKLDLYQVHAVTHGTDAQAEVSVRLSQDGRAMTSKAADPDTLVASAKAYLGALNKIVMKHQRDVPSAAAAS.

Residues 12–274 (VVIFDTTLRD…WCNVESTMLT (263 aa)) enclose the Pyruvate carboxyltransferase domain. Positions 21, 209, 211, and 245 each coordinate Mn(2+). Positions 398 to 520 (KLTSLTVIAG…RDVPSAAAAS (123 aa)) are regulatory domain.

It belongs to the alpha-IPM synthase/homocitrate synthase family. LeuA type 1 subfamily. Homodimer. The cofactor is Mn(2+).

The protein resides in the cytoplasm. It carries out the reaction 3-methyl-2-oxobutanoate + acetyl-CoA + H2O = (2S)-2-isopropylmalate + CoA + H(+). The protein operates within amino-acid biosynthesis; L-leucine biosynthesis; L-leucine from 3-methyl-2-oxobutanoate: step 1/4. In terms of biological role, catalyzes the condensation of the acetyl group of acetyl-CoA with 3-methyl-2-oxobutanoate (2-ketoisovalerate) to form 3-carboxy-3-hydroxy-4-methylpentanoate (2-isopropylmalate). The sequence is that of 2-isopropylmalate synthase from Nitrobacter hamburgensis (strain DSM 10229 / NCIMB 13809 / X14).